The chain runs to 123 residues: RNA silencing suppressor (123 aa).

Residues 52–55 (KRRR) form a basic region. A C4-type zinc finger spans residues 62 to 83 (CVRCFRVNPGFYFTKRCDGITC).

It belongs to the carlaviruses nucleic acid-binding protein family.

Functionally, suppressor of viral-induced RNA silencing. The potential mechanism of action is based on sequestering siRNAs. In Populus balsamifera (Balsam poplar), this protein is RNA silencing suppressor.